Reading from the N-terminus, the 229-residue chain is Large ribosomal subunit protein uL1 (229 aa).

It belongs to the universal ribosomal protein uL1 family. As to quaternary structure, part of the 50S ribosomal subunit.

Functionally, binds directly to 23S rRNA. The L1 stalk is quite mobile in the ribosome, and is involved in E site tRNA release. In terms of biological role, protein L1 is also a translational repressor protein, it controls the translation of the L11 operon by binding to its mRNA. The polypeptide is Large ribosomal subunit protein uL1 (Streptococcus pyogenes serotype M3 (strain SSI-1)).